Here is a 63-residue protein sequence, read N- to C-terminus: Large ribosomal subunit protein uL29 (63 aa).

Belongs to the universal ribosomal protein uL29 family.

The chain is Large ribosomal subunit protein uL29 from Herminiimonas arsenicoxydans.